A 236-amino-acid polypeptide reads, in one-letter code: LexA repressor (236 aa).

The interval Met1–Ser25 is disordered. Residues Ile51–Arg71 constitute a DNA-binding region (H-T-H motif). Active-site for autocatalytic cleavage activity residues include Ser160 and Lys197.

This sequence belongs to the peptidase S24 family. Homodimer.

It carries out the reaction Hydrolysis of Ala-|-Gly bond in repressor LexA.. In terms of biological role, represses a number of genes involved in the response to DNA damage (SOS response), including recA and lexA. In the presence of single-stranded DNA, RecA interacts with LexA causing an autocatalytic cleavage which disrupts the DNA-binding part of LexA, leading to derepression of the SOS regulon and eventually DNA repair. This is LexA repressor from Mycobacterium bovis (strain BCG / Pasteur 1173P2).